A 210-amino-acid polypeptide reads, in one-letter code: Ribosomal RNA large subunit methyltransferase E (210 aa).

Residues Gly-61, Trp-63, Asp-81, Asp-97, and Asp-122 each coordinate S-adenosyl-L-methionine. Residue Lys-162 is the Proton acceptor of the active site.

This sequence belongs to the class I-like SAM-binding methyltransferase superfamily. RNA methyltransferase RlmE family.

It localises to the cytoplasm. The enzyme catalyses uridine(2552) in 23S rRNA + S-adenosyl-L-methionine = 2'-O-methyluridine(2552) in 23S rRNA + S-adenosyl-L-homocysteine + H(+). Specifically methylates the uridine in position 2552 of 23S rRNA at the 2'-O position of the ribose in the fully assembled 50S ribosomal subunit. The polypeptide is Ribosomal RNA large subunit methyltransferase E (Xanthomonas axonopodis pv. citri (strain 306)).